We begin with the raw amino-acid sequence, 642 residues long: Chaperone protein DnaK (642 aa).

The residue at position 200 (Thr-200) is a Phosphothreonine; by autocatalysis. Positions Glu-600–Pro-616 are enriched in low complexity. The disordered stretch occupies residues Glu-600–Lys-642. Positions Asp-623–Asp-634 are enriched in basic and acidic residues.

This sequence belongs to the heat shock protein 70 family.

Acts as a chaperone. The protein is Chaperone protein DnaK of Akkermansia muciniphila (strain ATCC BAA-835 / DSM 22959 / JCM 33894 / BCRC 81048 / CCUG 64013 / CIP 107961 / Muc).